The chain runs to 406 residues: MTASKILLLIIDGVGDRPCGVLGNKTPLQAAKIPNLDRLATEGICGIMDPIAPGVRGGSDTSHLSLLGYDPHIYYTGRGPLEAAGCGIKMEPGMIGFRANYATIDDDGNVIDRRAGRIPDTTEITAAVKNGVDLSKYGVEIEFSPGTGHRAALALKGKGLSAAVSSNDPKKTGVQPKTIHPDDDSKEAAFTAEVCNEFSRQAAEILKNHPVNLERKARGEFPANVVLIRGAGEMGVYETFEEKHELSGSVVAAAALIAGIGSSVGLERIPVLPTTPLDEQVRLVCRELEKKDFVLFNVKTADEYGHDGKAVEKTKYLEEVDAALLPFFDMPELMIAVCGDHSTPCTIKEHSADPVPLILHGDGTRIDLVTNYDEISCAAGGLCRISGGSLMPILLDLIDKTHKYGA.

Positions 164–184 (VSSNDPKKTGVQPKTIHPDDD) are disordered.

This sequence belongs to the BPG-independent phosphoglycerate mutase family. A-PGAM subfamily.

The catalysed reaction is (2R)-2-phosphoglycerate = (2R)-3-phosphoglycerate. It functions in the pathway carbohydrate degradation; glycolysis; pyruvate from D-glyceraldehyde 3-phosphate: step 3/5. Its function is as follows. Catalyzes the interconversion of 2-phosphoglycerate and 3-phosphoglycerate. The polypeptide is 2,3-bisphosphoglycerate-independent phosphoglycerate mutase (Methanocorpusculum labreanum (strain ATCC 43576 / DSM 4855 / Z)).